A 51-amino-acid chain; its full sequence is Large ribosomal subunit protein bL33 (51 aa).

The protein belongs to the bacterial ribosomal protein bL33 family.

The polypeptide is Large ribosomal subunit protein bL33 (Nitrosospira multiformis (strain ATCC 25196 / NCIMB 11849 / C 71)).